The sequence spans 296 residues: Glycine--tRNA ligase alpha subunit (296 aa).

It belongs to the class-II aminoacyl-tRNA synthetase family. In terms of assembly, tetramer of two alpha and two beta subunits.

It localises to the cytoplasm. The catalysed reaction is tRNA(Gly) + glycine + ATP = glycyl-tRNA(Gly) + AMP + diphosphate. The polypeptide is Glycine--tRNA ligase alpha subunit (Listeria monocytogenes serotype 4a (strain HCC23)).